Consider the following 161-residue polypeptide: Chorion class B protein L12 (161 aa).

The N-terminal stretch at 1 to 21 (MAAKLILFVCATALVAQSVLS) is a signal peptide. The segment at 22–52 (IGCGCGGRGYGGLGYGGLGYGGLGGGCGRGF) is left arm. A run of 3 repeats spans residues 30-34 (GYGGL), 35-39 (GYGGL), and 40-44 (GYGGL). A 3 X 5 AA tandem repeats of G-Y-G-G-L region spans residues 30 to 44 (GYGGLGYGGLGYGGL). Residues 53-121 (SGGGLPVATA…GNGAVGITRE (69 aa)) form a central domain region. Positions 122–161 (GGFGYGAGYGDGYGLGFGGYGGGYGLGNGGYGGCGCGWGY) are right arm (Gly-rich tandem repeats).

The protein belongs to the chorion protein family.

Functionally, this protein is one of many from the eggshell of the silk moth. The protein is Chorion class B protein L12 of Bombyx mori (Silk moth).